Reading from the N-terminus, the 90-residue chain is Sec-independent protein translocase protein TatA (90 aa).

The helical transmembrane segment at 1-21 (MGISPWTLLIVLLIVLLVFGT) threads the bilayer. 2 stretches are compositionally biased toward basic and acidic residues: residues 42 to 59 (MKEG…EPSK) and 70 to 90 (SGEG…RHSS). Positions 42–90 (MKEGEEGAKEGEKSEPSKLEQPPEEEKESGEGHTIEGERSEQPRDRHSS) are disordered.

This sequence belongs to the TatA/E family. As to quaternary structure, the Tat system comprises two distinct complexes: a TatABC complex, containing multiple copies of TatA, TatB and TatC subunits, and a separate TatA complex, containing only TatA subunits. Substrates initially bind to the TatABC complex, which probably triggers association of the separate TatA complex to form the active translocon.

It is found in the cell inner membrane. In terms of biological role, part of the twin-arginine translocation (Tat) system that transports large folded proteins containing a characteristic twin-arginine motif in their signal peptide across membranes. TatA could form the protein-conducting channel of the Tat system. The sequence is that of Sec-independent protein translocase protein TatA from Alkalilimnicola ehrlichii (strain ATCC BAA-1101 / DSM 17681 / MLHE-1).